The primary structure comprises 60 residues: Short neurotoxin 1 (60 aa).

Disulfide bonds link Cys-3–Cys-22, Cys-17–Cys-39, Cys-41–Cys-52, and Cys-53–Cys-58.

This sequence belongs to the three-finger toxin family. Short-chain subfamily. Type I alpha-neurotoxin sub-subfamily. In terms of tissue distribution, expressed by the venom gland.

The protein localises to the secreted. Its function is as follows. Binds to muscle nicotinic acetylcholine receptor (nAChR) and inhibit acetylcholine from binding to the receptor, thereby impairing neuromuscular transmission. The protein is Short neurotoxin 1 of Dendroaspis polylepis polylepis (Black mamba).